Consider the following 284-residue polypeptide: UPF0276 protein PA3283 (284 aa).

Belongs to the UPF0276 family.

The sequence is that of UPF0276 protein PA3283 from Pseudomonas aeruginosa (strain ATCC 15692 / DSM 22644 / CIP 104116 / JCM 14847 / LMG 12228 / 1C / PRS 101 / PAO1).